The chain runs to 152 residues: Large ribosomal subunit protein uL15 (152 aa).

Residues 1–55 are disordered; it reads MRLHELKPNEGATHKKKRVGRGIGSGHGKTSTKGQKGQTSRSGDSKLPARFEGGQ. Residues 28–42 are compositionally biased toward polar residues; it reads GKTSTKGQKGQTSRS.

It belongs to the universal ribosomal protein uL15 family. Part of the 50S ribosomal subunit.

Functionally, binds to the 23S rRNA. This is Large ribosomal subunit protein uL15 from Sulfurihydrogenibium sp. (strain YO3AOP1).